Here is a 437-residue protein sequence, read N- to C-terminus: Phosphomethylpyrimidine synthase (437 aa).

Substrate is bound by residues Asn-69, Met-98, Tyr-127, His-163, Ser-185–Gly-187, Asp-226–Arg-229, and Glu-265. A Zn(2+)-binding site is contributed by His-269. Tyr-292 is a binding site for substrate. Zn(2+) is bound at residue His-333. Positions 409, 412, and 416 each coordinate [4Fe-4S] cluster.

The protein belongs to the ThiC family. [4Fe-4S] cluster is required as a cofactor.

The catalysed reaction is 5-amino-1-(5-phospho-beta-D-ribosyl)imidazole + S-adenosyl-L-methionine = 4-amino-2-methyl-5-(phosphooxymethyl)pyrimidine + CO + 5'-deoxyadenosine + formate + L-methionine + 3 H(+). Its pathway is cofactor biosynthesis; thiamine diphosphate biosynthesis. Catalyzes the synthesis of the hydroxymethylpyrimidine phosphate (HMP-P) moiety of thiamine from aminoimidazole ribotide (AIR) in a radical S-adenosyl-L-methionine (SAM)-dependent reaction. In Clostridium botulinum (strain Kyoto / Type A2), this protein is Phosphomethylpyrimidine synthase.